The sequence spans 115 residues: MDRNEIFEKIMRLEMNVNQLSKETSELKAHAVELVEENVALQLENDNLKKVLGNDEPTTIDTANSKPAKAVKKPLPSKDNLAILYGEGFHICKGELFGKHRHGEDCLFCLEVLSD.

Residues H90, C92, C106, and C109 each coordinate Zn(2+).

The protein belongs to the YabA family. As to quaternary structure, homotetramer. Interacts with both DnaA and DnaN, acting as a bridge between these two proteins. Zn(2+) serves as cofactor.

It localises to the cytoplasm. The protein localises to the nucleoid. Involved in control of chromosome replication initiation. Inhibits the cooperative binding of DnaA to the oriC region, thus negatively regulating initiation of chromosome replication. Inhibits the ability of DnaA-ATP to form a helix on DNA; does not disassemble preformed DnaA-DNA helices. Decreases the residence time of DnaA on the chromosome at its binding sites (oriC, replication forks and promoter-binding sites). Tethers DnaA to the replication machinery via the DNA polymerase beta sliding clamp subunit (dnaN). Associates with oriC and other DnaA targets on the chromosome in a DnaA-dependent manner. The chain is Replication initiation control protein YabA from Staphylococcus aureus (strain JH1).